We begin with the raw amino-acid sequence, 77 residues long: Large ribosomal subunit protein bL28 (77 aa).

Positions 1–25 are disordered; the sequence is MARVCQVTGKAPMSGNNVSHANNKT.

It belongs to the bacterial ribosomal protein bL28 family.

This Paraburkholderia phytofirmans (strain DSM 17436 / LMG 22146 / PsJN) (Burkholderia phytofirmans) protein is Large ribosomal subunit protein bL28.